The sequence spans 732 residues: TIR domain-containing adapter molecule 1 (732 aa).

The tract at residues 1–153 is TRIF-NTD; that stretch reads MDNPGPSLRG…CSSDIKGDPS (153 aa). Residues 84-91 carry the TRAF6-binding motif; it reads EGPEEPPD. Residues 144-191 form a disordered region; the sequence is CSSDIKGDPSGFQPLHSHQGSLQPPSASPAVTRSQPRPIDTPDWSWGH. Residues 159–178 show a composition bias toward polar residues; the sequence is HSHQGSLQPPSASPAVTRSQ. A pLxIS motif motif is present at residues 206-209; the sequence is LEIS. Residue serine 209 is modified to Phosphoserine. Lysine 228 is covalently cross-linked (Glycyl lysine isopeptide (Lys-Gly) (interchain with G-Cter in ubiquitin)). 2 consecutive short sequence motifs (TRAF6-binding) follow at residues 247–254 and 296–306; these read QEPEEISW and HCPIECTELST. Residues 305-331 are compositionally biased toward polar residues; sequence STNSRSPLTSTTESVGKQWPITSQRSP. The interval 305 to 389 is disordered; that stretch reads STNSRSPLTS…TSTSPVLDHS (85 aa). The segment covering 345 to 359 has biased composition (low complexity); sequence SSSPPAQPPSLQASP. The region spanning 395–534 is the TIR domain; it reads KFYNFVVIHA…KVANTFKTQK (140 aa). The tract at residues 514 to 713 is sufficient to induce apoptosis; that stretch reads WLDEHSPIFA…SSDDKTECSE (200 aa). Disordered regions lie at residues 603–679 and 696–732; these read TPSW…GPQP and MWGH…ETPE. Pro residues-rich tracts occupy residues 604 to 615 and 625 to 657; these read PSWPGCPQPIPS and PYSP…PPVS. A compositionally biased stretch (low complexity) spans 658–671; sequence SPQSQSFPSASSPA.

As to quaternary structure, homodimer. Found in a multi-helicase-TICAM1 complex at least composed of DHX36, DDX1, DDX21 and TICAM1; this complex exists in resting cells with or without poly(I:C) RNA ligand stimulation. Interacts (via TIR domain) with DDX21 (via C-terminus). Interacts (via TIR domain) with DHX36 (via C-terminus). Interacts with AZI2 and IRF7. Interacts (when phosphorylated) with IRF3; following activation and phosphorylation on the pLxIS motif by TBK1, recruits IRF3. Interacts with TICAM2 in TLR4 recruitment. Interaction with PIAS4 inhibits the TICAM1-induced NF-kappa-B, IRF and IFNB1 activation. Interacts with IKBKB and IKBKE. Interaction with SARM1 blocks TICAM1-dependent transcription factor activation. Interacts with TRAF3. Interacts with TRAFD1. Interacts with UBQLN1 (via UBA domain). Interacts with TBK1, TRAF6 and RIPK1 and these interactions are enhanced in the presence of WDFY1. Interacts (via the TIR domain) with TLR3 in response to poly(I:C) and this interaction is enhanced in the presence of WDFY1. Interacts with TLR4 in response to poly(I:C) in a WDFY1-dependent manner. Interacts with WDFY1 in response to poly(I:C). Interacts with TRIM56. Interacts (via the TIR domain) with TLR5. Interacts with TRIM8. Interacts with TAX1BP1 and TRIM32; these interactions target TICAM1 to TAX1BP1-mediated selective autophagic degradation. Interacts with DDX50. Phosphorylated by TBK1. Following activation, phosphorylated by TBK1 at Ser-209 in the pLxIS motif. The phosphorylated pLxIS motif constitutes an IRF3-binding motif, leading to recruitment of the transcription factor IRF3 to induce type-I interferons and other cytokines. Post-translationally, polyubiquitinated at Lys-228 by TRIM38 with 'Lys-48'-linked chains, leading to proteasomal degradation. Polyubiquitinated with 'Lys-6'- and 'Lys-33'-linked chains in a TRIM8-dependent manner; ubiquitination disrupts the interaction with TBK1 and subsequent interferon production.

The protein resides in the cytoplasm. The protein localises to the cytosol. Its subcellular location is the cytoplasmic vesicle. It localises to the autophagosome. It is found in the mitochondrion. Its function is as follows. Involved in innate immunity against invading pathogens. Adapter used by TLR3, TLR4 (through TICAM2) and TLR5 to mediate NF-kappa-B and interferon-regulatory factor (IRF) activation, and to induce apoptosis. Ligand binding to these receptors results in TRIF recruitment through its TIR domain. Distinct protein-interaction motifs allow recruitment of the effector proteins TBK1, TRAF6 and RIPK1, which in turn, lead to the activation of transcription factors IRF3 and IRF7, NF-kappa-B and FADD respectively. Phosphorylation by TBK1 on the pLxIS motif leads to recruitment and subsequent activation of the transcription factor IRF3 to induce expression of type I interferon and exert a potent immunity against invading pathogens. Component of a multi-helicase-TICAM1 complex that acts as a cytoplasmic sensor of viral double-stranded RNA (dsRNA) and plays a role in the activation of a cascade of antiviral responses including the induction of pro-inflammatory cytokines. In Mus musculus (Mouse), this protein is TIR domain-containing adapter molecule 1 (Ticam1).